The primary structure comprises 341 residues: Methionine import ATP-binding protein MetN 2 (341 aa).

One can recognise an ABC transporter domain in the interval 2–241; the sequence is IQFKNISKHY…PQHPTTKTFI (240 aa). ATP is bound at residue 38 to 45; sequence GYSGAGKS.

The protein belongs to the ABC transporter superfamily. Methionine importer (TC 3.A.1.24) family. As to quaternary structure, the complex is composed of two ATP-binding proteins (MetN), two transmembrane proteins (MetI) and a solute-binding protein (MetQ).

It is found in the cell inner membrane. The enzyme catalyses L-methionine(out) + ATP + H2O = L-methionine(in) + ADP + phosphate + H(+). It catalyses the reaction D-methionine(out) + ATP + H2O = D-methionine(in) + ADP + phosphate + H(+). Part of the ABC transporter complex MetNIQ involved in methionine import. Responsible for energy coupling to the transport system. This Acinetobacter baylyi (strain ATCC 33305 / BD413 / ADP1) protein is Methionine import ATP-binding protein MetN 2.